Reading from the N-terminus, the 353-residue chain is S-adenosylmethionine:tRNA ribosyltransferase-isomerase (353 aa).

The protein belongs to the QueA family. Monomer.

It localises to the cytoplasm. It catalyses the reaction 7-aminomethyl-7-carbaguanosine(34) in tRNA + S-adenosyl-L-methionine = epoxyqueuosine(34) in tRNA + adenine + L-methionine + 2 H(+). It participates in tRNA modification; tRNA-queuosine biosynthesis. In terms of biological role, transfers and isomerizes the ribose moiety from AdoMet to the 7-aminomethyl group of 7-deazaguanine (preQ1-tRNA) to give epoxyqueuosine (oQ-tRNA). In Blochmanniella floridana, this protein is S-adenosylmethionine:tRNA ribosyltransferase-isomerase.